A 137-amino-acid chain; its full sequence is Small ribosomal subunit protein uS9c (137 aa).

Residues 106 to 137 form a disordered region; it reads KSEGYLTRDPRVKERKKYGLKKARKAPQFSKR. The segment covering 118–137 has biased composition (basic residues); that stretch reads KERKKYGLKKARKAPQFSKR.

Belongs to the universal ribosomal protein uS9 family.

It localises to the plastid. The protein localises to the chloroplast. The protein is Small ribosomal subunit protein uS9c (rps9) of Pyropia yezoensis (Susabi-nori).